Reading from the N-terminus, the 541-residue chain is Beta-hexosaminidase 1 (541 aa).

A signal peptide spans 1–20 (MSTNLLRLILLFITLSITSS). 2 N-linked (GlcNAc...) asparagine glycosylation sites follow: Asn44 and Asn304. A disulfide bridge connects residues Cys295 and Cys337. Glu332 acts as the Proton donor in catalysis. Asn340, Asn352, and Asn497 each carry an N-linked (GlcNAc...) asparagine glycan. Cysteines 511 and 538 form a disulfide.

Belongs to the glycosyl hydrolase 20 family. In terms of processing, N-glycosylated. In terms of tissue distribution, expressed in roots, leaves, stems, flowers and siliques.

It is found in the vacuole. It catalyses the reaction Hydrolysis of terminal non-reducing N-acetyl-D-hexosamine residues in N-acetyl-beta-D-hexosaminides.. Inhibited by N-acetylcastanospermine, 2-acet-amido-1,2-dideoxynojirimycin and PUGNAc. Has a broad substrate specificity. Can use synthetic substrates such as pyridylaminated chitotriose, pyridylaminated chitobiose, p-nitrophenyl-beta-N-acetylglucosaminide, p-nitrophenyl-2-acetamido-2-deoxy-beta-D-glucopyranoside (pNP-GlcNAc), p-nitrophenyl-2-acetamido-2-deoxy-beta-D-galactopyranoside (pNP-GalNAc), 4-methylumbelliferyl-2-acetamido-2-deoxy-beta-D-glucopyranoside (MU-GlcNAc), and 4-methylumbelliferyl-6-sulfo-2-acetamido-2-deoxy-beta-D-glucopyranoside (MU-GlcNAc-6SO(4)) as substrates. Removes terminal GlcNAc residues from alpha1,3- and alpha1,6-mannosyl branches of biantennary N-glycans without any strict branch preference. Required for the presence of paucimannosidic N-glycans in glycoproteins of roots and, to a lower extent, of leaves. The chain is Beta-hexosaminidase 1 (HEXO1) from Arabidopsis thaliana (Mouse-ear cress).